Consider the following 467-residue polypeptide: Light-independent protochlorophyllide reductase subunit N (467 aa).

The [4Fe-4S] cluster site is built by C22, C47, and C107.

Belongs to the BchN/ChlN family. In terms of assembly, protochlorophyllide reductase is composed of three subunits; ChlL, ChlN and ChlB. Forms a heterotetramer of two ChlB and two ChlN subunits. It depends on [4Fe-4S] cluster as a cofactor.

The protein resides in the plastid. Its subcellular location is the chloroplast. It catalyses the reaction chlorophyllide a + oxidized 2[4Fe-4S]-[ferredoxin] + 2 ADP + 2 phosphate = protochlorophyllide a + reduced 2[4Fe-4S]-[ferredoxin] + 2 ATP + 2 H2O. The protein operates within porphyrin-containing compound metabolism; chlorophyll biosynthesis (light-independent). Its function is as follows. Component of the dark-operative protochlorophyllide reductase (DPOR) that uses Mg-ATP and reduced ferredoxin to reduce ring D of protochlorophyllide (Pchlide) to form chlorophyllide a (Chlide). This reaction is light-independent. The NB-protein (ChlN-ChlB) is the catalytic component of the complex. This is Light-independent protochlorophyllide reductase subunit N from Pinus thunbergii (Japanese black pine).